Here is a 251-residue protein sequence, read N- to C-terminus: MKTALLLKTKSQPFDPYVEAFEKYGRDTAFIPVLRHKRVHEEQLRDKLKNVRKTYCGLIVTSQRVSETLDEALKQEDETERQKILMETPIFTVGPATDDSIRRLGFQQTHGKDCGRGEVLADLIEEWYTTTKQHKPLLFLVGEKHRDIIQRKLGDDRVDSLIVYATQELENTETQIKDTIRKHPTIDWIVAFSPTSICSLLNTFELKIATIGPTTGDYLKKLGTQPNVVSPAPNPESLASSIVAFDEENSS.

A disordered region spans residues 231-251 (PAPNPESLASSIVAFDEENSS).

Belongs to the uroporphyrinogen-III synthase family.

The enzyme catalyses hydroxymethylbilane = uroporphyrinogen III + H2O. It participates in porphyrin-containing compound metabolism; protoporphyrin-IX biosynthesis; coproporphyrinogen-III from 5-aminolevulinate: step 3/4. In terms of biological role, catalyzes cyclization of the linear tetrapyrrole, hydroxymethylbilane, to the macrocyclic uroporphyrinogen III. In Schizosaccharomyces pombe (strain 972 / ATCC 24843) (Fission yeast), this protein is Uroporphyrinogen-III synthase (ups1).